The primary structure comprises 270 residues: Peflin (270 aa).

The disordered stretch occupies residues 1–97; it reads MSYQYGQGYS…YRQQGSAGNV (97 aa). 5 tandem repeats follow at residues 22-30, 44-54, 62-70, 72-81, and 83-91. Residues 22–91 form a 5 X 9 AA approximate tandem repeat of [AP]-P-G-G-P-Y-G-G-P-P region; that stretch reads PPRAPYAGGP…QPQGGPYRQQ (70 aa). 2 stretches are compositionally biased toward low complexity: residues 26 to 47 and 55 to 66; these read PYAG…PPGQ and YGSYGQPGPRAP. A compositionally biased stretch (gly residues) spans 67 to 84; it reads YGGGQAPGGPYGGYGQPQ. 5 EF-hand domains span residues 100-135, 141-169, 170-202, 203-239, and 240-269; these read GVNP…FNNS, TCIM…WTFL, QQWR…MGYN, LSPQ…LQSM, and TQAF…ITRL. Ca(2+) is bound by residues Asp-113, Asp-115, Ser-117, Tyr-119, and Glu-124. Residues Asp-180, Asp-182, Ser-184, Ser-186, and Glu-191 each coordinate Ca(2+).

As to quaternary structure, heterodimer; heterodimerizes (via the EF-hand 5) with pdcd6.

It localises to the cytoplasm. Its subcellular location is the endoplasmic reticulum. The protein localises to the membrane. The protein resides in the cytoplasmic vesicle. It is found in the COPII-coated vesicle membrane. Functionally, calcium-binding protein that acts as an adapter that bridges unrelated proteins or stabilizes weak protein-protein complexes in response to calcium. Acts as a negative regulator of ER-Golgi transport. The polypeptide is Peflin (Danio rerio (Zebrafish)).